Reading from the N-terminus, the 200-residue chain is Potassium-transporting ATPase KdpC subunit (200 aa).

Residues 9–31 (LVMLVALTALTGLVYPLAMTGVA) traverse the membrane as a helical segment. Residues 68 to 97 (GRPSATTAPDPQDSSKTVPSPYNAANSMGA) are disordered. Residues 71–96 (SATTAPDPQDSSKTVPSPYNAANSMG) show a composition bias toward polar residues.

It belongs to the KdpC family. As to quaternary structure, the system is composed of three essential subunits: KdpA, KdpB and KdpC.

It is found in the cell inner membrane. Its function is as follows. Part of the high-affinity ATP-driven potassium transport (or Kdp) system, which catalyzes the hydrolysis of ATP coupled with the electrogenic transport of potassium into the cytoplasm. This subunit acts as a catalytic chaperone that increases the ATP-binding affinity of the ATP-hydrolyzing subunit KdpB by the formation of a transient KdpB/KdpC/ATP ternary complex. The chain is Potassium-transporting ATPase KdpC subunit from Rhodopseudomonas palustris (strain BisA53).